We begin with the raw amino-acid sequence, 167 residues long: U-scoloptoxin(08)-Er5b (167 aa).

An N-terminal signal peptide occupies residues 1–22 (MKTNCEFPLLCLLIVLVANVEG). A propeptide spanning residues 23 to 94 (EVEDTGLKMV…KRLWRNWERR (72 aa)) is cleaved from the precursor. 3 RLWRNWE repeats span residues 34-40 (RLWRNWE), 61-67 (RLWRNWE), and 86-92 (RLWRNWE). Position 95 is a pyrrolidone carboxylic acid (glutamine 95). The stretch at 107–113 (ELWRNWE) is one RLWRNWE 4; approximate repeat. Residues 112-118 (WEDLKRR) constitute a propeptide that is removed on maturation. At glutamine 119 the chain carries Pyrrolidone carboxylic acid. One copy of the RLWRNWE 5 repeat lies at 134–140 (RLWRNWE). A propeptide spanning residues 139–167 (WEDNHATLRKRSADSLSRQKRLGKERGKE) is cleaved from the precursor. A disordered region spans residues 147–167 (RKRSADSLSRQKRLGKERGKE).

It belongs to the scoloptoxin-08 family. As to expression, expressed by the venom gland.

It is found in the secreted. This Ethmostigmus rubripes (Giant centipede) protein is U-scoloptoxin(08)-Er5b.